The primary structure comprises 85 residues: Large ribosomal subunit protein bL27 (85 aa).

The interval 1–20 (MAHKKGGGTTRNGRDSESKR) is disordered.

It belongs to the bacterial ribosomal protein bL27 family.

In Herminiimonas arsenicoxydans, this protein is Large ribosomal subunit protein bL27.